Here is a 730-residue protein sequence, read N- to C-terminus: Catalase-peroxidase 1 (730 aa).

Residues Trp92–Tyr217 constitute a cross-link (tryptophyl-tyrosyl-methioninium (Trp-Tyr) (with M-243)). His93 (proton acceptor) is an active-site residue. Residues Tyr217–Met243 constitute a cross-link (tryptophyl-tyrosyl-methioninium (Tyr-Met) (with W-92)). Heme b is bound at residue His258.

It belongs to the peroxidase family. Peroxidase/catalase subfamily. Homodimer or homotetramer. It depends on heme b as a cofactor. Post-translationally, formation of the three residue Trp-Tyr-Met cross-link is important for the catalase, but not the peroxidase activity of the enzyme.

The catalysed reaction is H2O2 + AH2 = A + 2 H2O. It catalyses the reaction 2 H2O2 = O2 + 2 H2O. Its function is as follows. Bifunctional enzyme with both catalase and broad-spectrum peroxidase activity. The sequence is that of Catalase-peroxidase 1 from Haloarcula marismortui (strain ATCC 43049 / DSM 3752 / JCM 8966 / VKM B-1809) (Halobacterium marismortui).